The chain runs to 224 residues: Deoxyribose-phosphate aldolase (224 aa).

Asp-92 acts as the Proton donor/acceptor in catalysis. Lys-155 (schiff-base intermediate with acetaldehyde) is an active-site residue. Catalysis depends on Lys-184, which acts as the Proton donor/acceptor.

It belongs to the DeoC/FbaB aldolase family. DeoC type 1 subfamily.

It is found in the cytoplasm. It carries out the reaction 2-deoxy-D-ribose 5-phosphate = D-glyceraldehyde 3-phosphate + acetaldehyde. Its pathway is carbohydrate degradation; 2-deoxy-D-ribose 1-phosphate degradation; D-glyceraldehyde 3-phosphate and acetaldehyde from 2-deoxy-alpha-D-ribose 1-phosphate: step 2/2. Functionally, catalyzes a reversible aldol reaction between acetaldehyde and D-glyceraldehyde 3-phosphate to generate 2-deoxy-D-ribose 5-phosphate. The sequence is that of Deoxyribose-phosphate aldolase from Clostridium perfringens (strain 13 / Type A).